Consider the following 228-residue polypeptide: Vesicle transport protein SEC20 (228 aa).

Residues 1 to 199 (MAAPQDVHVR…LITKYNRREL (199 aa)) are Cytoplasmic-facing. Residues 37-90 (LSALTELNTKVKEKFQQLRHRIQDLEQLAKEQDKESEKQLLLQEVENHKKQMLS) adopt a coiled-coil conformation. Residues 200–220 (TDKLLIFLALALFLATVLYIV) traverse the membrane as a helical; Anchor for type IV membrane protein segment. Residues 221-228 (KKRLFPFL) lie on the Lumenal side of the membrane.

It belongs to the SEC20 family. Component of a SNARE complex consisting of STX18, USE1L, BNIP1/SEC20L and SEC22B. Interacts directly with STX18, RINT1/TIP20L and NAPA. Interacts with ZW10 through RINT1. Interacts with BCL2. Interacts with RNF186. Interacts with RNF185. Interacts with SQSTM1; increased by 'Lys-63'-linked polyubiquitination of BNIP1. In terms of assembly, (Microbial infection) Interacts with adenovirus E1B 19K protein; plays a role in the suppression of cell apoptosis by the viral protein. In terms of processing, polyubiquitinated. 'Lys-63'-linked polyubiquitination by RNF185 increases the interaction with the autophagy receptor SQSTM1. Undergoes 'Lys-29'- and 'Lys-63'-linked polyubiquitination by RNF186 that may regulate BNIP1 localization to the mitochondrion. As to expression, isoform 1 is highly expressed in heart, brain, liver skeletal muscle and pancreas. Isoform 3 is moderately expressed in placenta, lung and kidney. Isoform 4 is highly expressed in testis and small intestine.

Its subcellular location is the endoplasmic reticulum membrane. It localises to the mitochondrion membrane. As part of a SNARE complex may be involved in endoplasmic reticulum membranes fusion and be required for the maintenance of endoplasmic reticulum organization. Also plays a role in apoptosis. It is for instance required for endoplasmic reticulum stress-induced apoptosis. As a substrate of RNF185 interacting with SQSTM1, might also be involved in mitochondrial autophagy. The chain is Vesicle transport protein SEC20 (BNIP1) from Homo sapiens (Human).